The primary structure comprises 419 residues: UDP-N-acetylglucosamine 1-carboxyvinyltransferase (419 aa).

A phosphoenolpyruvate-binding site is contributed by 22–23 (KN). Position 91 (Arg-91) interacts with UDP-N-acetyl-alpha-D-glucosamine. Residue Cys-115 is the Proton donor of the active site. Cys-115 bears the 2-(S-cysteinyl)pyruvic acid O-phosphothioketal mark. Residues 120–124 (RPVDL), 160–163 (KVSV), Asp-305, and Ile-327 each bind UDP-N-acetyl-alpha-D-glucosamine.

This sequence belongs to the EPSP synthase family. MurA subfamily.

It is found in the cytoplasm. The catalysed reaction is phosphoenolpyruvate + UDP-N-acetyl-alpha-D-glucosamine = UDP-N-acetyl-3-O-(1-carboxyvinyl)-alpha-D-glucosamine + phosphate. The protein operates within cell wall biogenesis; peptidoglycan biosynthesis. Functionally, cell wall formation. Adds enolpyruvyl to UDP-N-acetylglucosamine. The protein is UDP-N-acetylglucosamine 1-carboxyvinyltransferase of Citrobacter koseri (strain ATCC BAA-895 / CDC 4225-83 / SGSC4696).